Consider the following 159-residue polypeptide: Cyclic pyranopterin monophosphate synthase (159 aa).

Substrate-binding positions include 75 to 77 (LCH) and 113 to 114 (ME). The active site involves Asp128.

This sequence belongs to the MoaC family. In terms of assembly, homohexamer; trimer of dimers.

The enzyme catalyses (8S)-3',8-cyclo-7,8-dihydroguanosine 5'-triphosphate = cyclic pyranopterin phosphate + diphosphate. It functions in the pathway cofactor biosynthesis; molybdopterin biosynthesis. In terms of biological role, catalyzes the conversion of (8S)-3',8-cyclo-7,8-dihydroguanosine 5'-triphosphate to cyclic pyranopterin monophosphate (cPMP). This chain is Cyclic pyranopterin monophosphate synthase, found in Heliobacterium modesticaldum (strain ATCC 51547 / Ice1).